The following is a 448-amino-acid chain: Adenylosuccinate synthetase (448 aa).

GTP-binding positions include G36 to K42 and G64 to T66. The Proton acceptor role is filled by D37. 2 residues coordinate Mg(2+): D37 and G64. Residues D37–K40, N62–H65, T154, R168, N246, T261, and R325 contribute to the IMP site. Catalysis depends on H65, which acts as the Proton donor. V321–R327 contributes to the substrate binding site. Residues R327, K353–D355, and G436–G438 each bind GTP.

It belongs to the adenylosuccinate synthetase family. In terms of assembly, homodimer. Mg(2+) is required as a cofactor.

The protein localises to the cytoplasm. It carries out the reaction IMP + L-aspartate + GTP = N(6)-(1,2-dicarboxyethyl)-AMP + GDP + phosphate + 2 H(+). The protein operates within purine metabolism; AMP biosynthesis via de novo pathway; AMP from IMP: step 1/2. Its function is as follows. Plays an important role in the de novo pathway and in the salvage pathway of purine nucleotide biosynthesis. Catalyzes the first committed step in the biosynthesis of AMP from IMP. The sequence is that of Adenylosuccinate synthetase from Drosophila persimilis (Fruit fly).